A 581-amino-acid polypeptide reads, in one-letter code: Intermediate filament protein ifa-2 (581 aa).

2 disordered regions span residues 1–35 (MTDP…GSGN) and 47–68 (SSVS…RDNR). Residues 1–74 (MTDPDSYRSS…RDNREREKKE (74 aa)) are head. The segment covering 7 to 28 (YRSSITSRPSFNRTVTSSSQNY) has biased composition (polar residues). The IF rod domain occupies 71–424 (EKKEIMELND…QMLEGNSEGN (354 aa)). Residues 75–106 (IMELNDRLASYIEKVRFLDAQNRKLDADLKML) are coil 1A. The linker 1 stretch occupies residues 107–120 (QGRFGKSTGSVKVM). The segment at 121 to 258 (YEMEITTATN…RGFETELKEL (138 aa)) is coil 1B. The tract at residues 259–276 (QAQAARDTTSENREYFKN) is linker 12. A coil 2 region spans residues 277-424 (ELANAMRDIR…QMLEGNSEGN (148 aa)). The segment at 425-578 (GLRQLVEKVV…THIQRQSQQT (154 aa)) is tail. Residues 449-469 (RVVKGEHSSRTSYQRSAKGNV) are disordered. The LTD domain occupies 457–574 (SRTSYQRSAK…EERATHIQRQ (118 aa)).

The protein belongs to the intermediate filament family. In terms of assembly, forms some heteromeric filaments with ifb-1. In terms of tissue distribution, mainly expressed in regions of the hypodermis adjacent to muscle. Expressed in longitudinal stripes where the mechanosensory neurons interface with the hypodermis. Also expressed to the uterine seam and within the uterine-vulval cells.

It is found in the cell junction. The protein localises to the hemidesmosome. Cytoplasmic intermediate filaments provide mechanical strength to cells. Essential protein, involved in attachment structures in epidermal cells that connect muscles to the external cuticle. Probably acts by forming hypodermal hemidesmosome complexes that help mediate muscle-cuticle force transduction. Although expressed during embryogenesis, it is not required for embryonic development of muscle-cuticle linkages nor for the localization of other proteins to the hemidesmosomes in embryos. This Caenorhabditis elegans protein is Intermediate filament protein ifa-2.